The chain runs to 382 residues: Mannitol-1-phosphate 5-dehydrogenase (382 aa).

Position 4–15 (4–15) interacts with NAD(+); it reads AVHFGAGNIGRG.

Belongs to the mannitol dehydrogenase family.

It carries out the reaction D-mannitol 1-phosphate + NAD(+) = beta-D-fructose 6-phosphate + NADH + H(+). The polypeptide is Mannitol-1-phosphate 5-dehydrogenase (Vibrio vulnificus (strain YJ016)).